Consider the following 156-residue polypeptide: Endoribonuclease YbeY (156 aa).

Zn(2+)-binding residues include His122, His126, and His132.

It belongs to the endoribonuclease YbeY family. It depends on Zn(2+) as a cofactor.

It localises to the cytoplasm. Functionally, single strand-specific metallo-endoribonuclease involved in late-stage 70S ribosome quality control and in maturation of the 3' terminus of the 16S rRNA. This is Endoribonuclease YbeY from Geobacillus sp. (strain WCH70).